Here is a 163-residue protein sequence, read N- to C-terminus: Ribosome maturation factor RimM (163 aa).

Positions Pro92 to Phe161 constitute a PRC barrel domain.

It belongs to the RimM family. As to quaternary structure, binds ribosomal protein uS19.

It localises to the cytoplasm. An accessory protein needed during the final step in the assembly of 30S ribosomal subunit, possibly for assembly of the head region. Essential for efficient processing of 16S rRNA. May be needed both before and after RbfA during the maturation of 16S rRNA. It has affinity for free ribosomal 30S subunits but not for 70S ribosomes. This chain is Ribosome maturation factor RimM, found in Sphingopyxis alaskensis (strain DSM 13593 / LMG 18877 / RB2256) (Sphingomonas alaskensis).